The chain runs to 369 residues: Signal recognition particle receptor FtsY (369 aa).

A compositionally biased stretch (basic and acidic residues) spans 20–42; sequence GEENKKEPETRQTDQLESKKEET. Positions 20 to 58 are disordered; it reads GEENKKEPETRQTDQLESKKEETIQQQQNVQQPQAENKI. The span at 44 to 53 shows a compositional bias: low complexity; sequence QQQQNVQQPQ. GTP contacts are provided by residues 180–187, 262–266, and 320–323; these read GVNGVGKT, DTAGR, and TKVD.

Belongs to the GTP-binding SRP family. FtsY subfamily. In terms of assembly, part of the signal recognition particle protein translocation system, which is composed of SRP and FtsY.

The protein localises to the cell membrane. It is found in the cytoplasm. It carries out the reaction GTP + H2O = GDP + phosphate + H(+). Involved in targeting and insertion of nascent membrane proteins into the cytoplasmic membrane. Acts as a receptor for the complex formed by the signal recognition particle (SRP) and the ribosome-nascent chain (RNC). The protein is Signal recognition particle receptor FtsY of Sulfolobus acidocaldarius (strain ATCC 33909 / DSM 639 / JCM 8929 / NBRC 15157 / NCIMB 11770).